The sequence spans 156 residues: Pre-mRNA-splicing factor SNT309 (156 aa).

As to quaternary structure, associated with the spliceosome.

Its subcellular location is the nucleus. Its function is as follows. Involved in pre-mRNA splicing. This chain is Pre-mRNA-splicing factor SNT309 (SNT309), found in Candida glabrata (strain ATCC 2001 / BCRC 20586 / JCM 3761 / NBRC 0622 / NRRL Y-65 / CBS 138) (Yeast).